A 320-amino-acid chain; its full sequence is Ribosomal RNA small subunit methyltransferase H (320 aa).

Residues 42–44 (GGH), aspartate 62, phenylalanine 86, aspartate 108, and glutamine 115 each bind S-adenosyl-L-methionine.

Belongs to the methyltransferase superfamily. RsmH family.

It is found in the cytoplasm. It catalyses the reaction cytidine(1402) in 16S rRNA + S-adenosyl-L-methionine = N(4)-methylcytidine(1402) in 16S rRNA + S-adenosyl-L-homocysteine + H(+). Specifically methylates the N4 position of cytidine in position 1402 (C1402) of 16S rRNA. The polypeptide is Ribosomal RNA small subunit methyltransferase H (Yersinia pseudotuberculosis serotype O:1b (strain IP 31758)).